Consider the following 199-residue polypeptide: Imidazoleglycerol-phosphate dehydratase (199 aa).

It belongs to the imidazoleglycerol-phosphate dehydratase family.

The protein localises to the cytoplasm. The enzyme catalyses D-erythro-1-(imidazol-4-yl)glycerol 3-phosphate = 3-(imidazol-4-yl)-2-oxopropyl phosphate + H2O. Its pathway is amino-acid biosynthesis; L-histidine biosynthesis; L-histidine from 5-phospho-alpha-D-ribose 1-diphosphate: step 6/9. This Acidithiobacillus ferrooxidans (strain ATCC 53993 / BNL-5-31) (Leptospirillum ferrooxidans (ATCC 53993)) protein is Imidazoleglycerol-phosphate dehydratase.